Reading from the N-terminus, the 576-residue chain is Polypeptide N-acetylgalactosaminyltransferase 12 (576 aa).

The Cytoplasmic segment spans residues Met1 to Glu19. Residues Ala20–Arg37 traverse the membrane as a helical; Signal-anchor for type II membrane protein segment. Residues Ser38 to Pro58 form a disordered region. Topologically, residues Ser38 to Ser576 are lumenal. Cystine bridges form between Cys120–Cys353, Cys344–Cys417, Cys453–Cys474, Cys501–Cys516, and Cys542–Cys561. The segment at Leu130–Arg239 is catalytic subdomain A. The substrate site is built by Asp171 and Arg200. Asp223 and His225 together coordinate Mn(2+). Residues Val299 to Pro361 form a catalytic subdomain B region. Trp330 lines the substrate pocket. His358 lines the Mn(2+) pocket. Tyr366 is a binding site for substrate. Residues Phe440 to Lys572 enclose the Ricin B-type lectin domain.

This sequence belongs to the glycosyltransferase 2 family. GalNAc-T subfamily. It depends on Mn(2+) as a cofactor.

It localises to the golgi apparatus membrane. It catalyses the reaction L-seryl-[protein] + UDP-N-acetyl-alpha-D-galactosamine = a 3-O-[N-acetyl-alpha-D-galactosaminyl]-L-seryl-[protein] + UDP + H(+). The enzyme catalyses L-threonyl-[protein] + UDP-N-acetyl-alpha-D-galactosamine = a 3-O-[N-acetyl-alpha-D-galactosaminyl]-L-threonyl-[protein] + UDP + H(+). The protein operates within protein modification; protein glycosylation. Functionally, catalyzes the initial reaction in O-linked oligosaccharide biosynthesis, the transfer of an N-acetyl-D-galactosamine residue to a serine or threonine residue on the protein receptor. Has activity toward non-glycosylated peptides such as Muc5AC, Muc1a and EA2, and no detectable activity with Muc2 and Muc7. Displays enzymatic activity toward the Gal-NAc-Muc5AC glycopeptide, but no detectable activity to mono-GalNAc-glycosylated Muc1a, Muc2, Muc7 and EA2. May play an important role in the initial step of mucin-type oligosaccharide biosynthesis in digestive organs. The polypeptide is Polypeptide N-acetylgalactosaminyltransferase 12 (Galnt12) (Mus musculus (Mouse)).